We begin with the raw amino-acid sequence, 313 residues long: Glycine--tRNA ligase alpha subunit (313 aa).

It belongs to the class-II aminoacyl-tRNA synthetase family. As to quaternary structure, tetramer of two alpha and two beta subunits.

Its subcellular location is the cytoplasm. It catalyses the reaction tRNA(Gly) + glycine + ATP = glycyl-tRNA(Gly) + AMP + diphosphate. This chain is Glycine--tRNA ligase alpha subunit, found in Leuconostoc mesenteroides subsp. mesenteroides (strain ATCC 8293 / DSM 20343 / BCRC 11652 / CCM 1803 / JCM 6124 / NCDO 523 / NBRC 100496 / NCIMB 8023 / NCTC 12954 / NRRL B-1118 / 37Y).